The primary structure comprises 167 residues: Small ribosomal subunit protein uS5 (167 aa).

In terms of domain architecture, S5 DRBM spans 12–75 (LQEKLIAVNR…EKARRNIVTV (64 aa)).

It belongs to the universal ribosomal protein uS5 family. As to quaternary structure, part of the 30S ribosomal subunit. Contacts proteins S4 and S8.

Its function is as follows. With S4 and S12 plays an important role in translational accuracy. Located at the back of the 30S subunit body where it stabilizes the conformation of the head with respect to the body. The chain is Small ribosomal subunit protein uS5 from Shewanella baltica (strain OS223).